Here is a 190-residue protein sequence, read N- to C-terminus: MSGLRPALSTFIFLLLITGGVYPLLTTVLGQWWFPWQANGSLIREGDTVRGSALIGQNFTGNGYFHGRPSATAEMPYNPQASGGSNLAVSNPELDKLIAARVAALRAANPDASASVPVELVTASASGLDNNITPQAAAWQIPRVAKARNLSVEQLTQLIAKYSQQPLVKYIGQPVVNIVELNLALDKLDE.

Residues 10–30 (TFIFLLLITGGVYPLLTTVLG) traverse the membrane as a helical segment.

It belongs to the KdpC family. As to quaternary structure, the system is composed of three essential subunits: KdpA, KdpB and KdpC.

It localises to the cell inner membrane. Its function is as follows. Part of the high-affinity ATP-driven potassium transport (or Kdp) system, which catalyzes the hydrolysis of ATP coupled with the electrogenic transport of potassium into the cytoplasm. This subunit acts as a catalytic chaperone that increases the ATP-binding affinity of the ATP-hydrolyzing subunit KdpB by the formation of a transient KdpB/KdpC/ATP ternary complex. This is Potassium-transporting ATPase KdpC subunit from Escherichia coli (strain K12 / MC4100 / BW2952).